The sequence spans 270 residues: MKLLLSNDDGIFSPGIRTLADTLAAAGHEVMVVCPDRERSATGHGLTLFDPIRAEAVASLFHPSVKAWACSGTPSDCIKLALGALLDSLPDFVLSGINQGSNLGTDILYSGTVSAAMEGVIEGIPSMALSLTSFTVREFQPAANFARDLLAKLDHTPLPEAMLLNINVPALPAAEIAGVAITRQGIRRYHDMFKKRVDPRGKTYYWLAGEVLEDVNDPEQGVDSEMLTDVQAIRENLITITPLKYNLTHTPGLQTLSTWLNLPLLLQTDP.

A divalent metal cation is bound by residues Asp8, Asp9, Ser40, and Asn98.

The protein belongs to the SurE nucleotidase family. A divalent metal cation is required as a cofactor.

The protein resides in the cytoplasm. It carries out the reaction a ribonucleoside 5'-phosphate + H2O = a ribonucleoside + phosphate. Nucleotidase that shows phosphatase activity on nucleoside 5'-monophosphates. The chain is 5'-nucleotidase SurE from Cyanothece sp. (strain PCC 7425 / ATCC 29141).